The sequence spans 656 residues: Protein teflon (656 aa).

The C2H2-type 1 zinc finger occupies 33–56 (LYCHFCRDLFTQLPEFLRHLQSNH). A disordered region spans residues 80–131 (DKAHEDAQSAGHNSSSGDSRSLMNSEDSRAIDGSEENSDNSPVKPEQIGKQN). Residues 89–104 (AGHNSSSGDSRSLMNS) are compositionally biased toward polar residues. 2 consecutive C2H2-type zinc fingers follow at residues 606 to 628 (YFCK…LISH) and 632 to 655 (FQCT…RNAH).

This sequence belongs to the Teflon family.

It localises to the nucleus. Its subcellular location is the chromosome. Its function is as follows. Specifically required in males for proper segregation of autosomal bivalents at meiosis I. Expression is required in the male germ line prior to spermatocyte stage S4. May have a role as a bridging molecule maintaining adhesion to hold autosome bivalents together via heterochromatic connections. This Drosophila sechellia (Fruit fly) protein is Protein teflon.